The primary structure comprises 252 residues: Carbohydrate deacetylase (252 aa).

Mg(2+)-binding residues include H59 and H122.

Belongs to the YdjC deacetylase family. As to quaternary structure, homodimer. Requires Mg(2+) as cofactor.

Probably catalyzes the deacetylation of acetylated carbohydrates an important step in the degradation of oligosaccharides. This Vibrio vulnificus (strain CMCP6) protein is Carbohydrate deacetylase.